A 286-amino-acid polypeptide reads, in one-letter code: MATPRRPRVNPIDTTLSESALFAANRAVGEVSFDVQRVDGVTRRNRLHESGSLRVRFPSPEGEGLSAMFVNTAGGIAGGDRFAVDIAAGEGTRLTLTTAAAEKIYRSNGPTSRLDIALKVAAGAALHWLPQETILFDQARVERRFEIDVAEGAALLLAEIVVFGRAAMGERMLSGSFVDRWRLRRGGRLMFAETVRLDGDIGQKLARPAIANGGAAIGTALIVPGDEKLVERLREAAQHFRGEVGISAWNGFAMARFCAQDAVRLRADMMAVLGRTGAALPRLWLN.

It belongs to the UreD family. UreD, UreF and UreG form a complex that acts as a GTP-hydrolysis-dependent molecular chaperone, activating the urease apoprotein by helping to assemble the nickel containing metallocenter of UreC. The UreE protein probably delivers the nickel.

The protein localises to the cytoplasm. Its function is as follows. Required for maturation of urease via the functional incorporation of the urease nickel metallocenter. In Rhodopseudomonas palustris (strain BisA53), this protein is Urease accessory protein UreD.